The following is a 1214-amino-acid chain: Brassinosteroid LRR receptor kinase BRL3 (1214 aa).

The signal sequence occupies residues 1-29 (MAAVRVVAPAPSVLLLVAAAVVLLHLARA). N-linked (GlcNAc...) asparagine glycosylation occurs at Asn61. The Cys pair 1 motif lies at 69-76 (CAWAGVSC). 22 LRR repeats span residues 103–127 (LSALRRLDLRGNAFHGDLSRHGSPR), 131–155 (PCALVEVDISSNTFNGTLPRAFLAS), 156–177 (CGGLQTLNLSRNSLTGGGYPFP), 178–202 (PSLRRLDMSRNQLSDAGLLNYSLTG), 204–228 (HGIQYLNLSANQFTGSLPGLAPCTE), 230–250 (SVLDLSWNLMSGVLPPRFVAM), 252–276 (PANLTYLSIAGNNFSMDISDYEFGG), 277–302 (CANLTLLDWSYNRLRSTGLPRSLVDC), 303–325 (RRLEALDMSGNKLLSGPIPTFLV), 327–351 (LQALRRLSLAGNRFTGEISDKLSIL), 353–375 (KTLVELDLSSNQLIGSLPASFGQ), 377–400 (RFLQVLDLGNNQLSGDFVETVITN), 401–427 (ISSLRVLRLPFNNITGANPLPALASRC), 429–451 (LLEVIDLGSNEFDGEIMPDLCSS), 452–476 (LPSLRKLLLPNNYINGTVPSSLSNC), 478–500 (NLESIDLSFNLLVGQIPPEILFL), 502–525 (KLVDLVLWANNLSGEIPDKFCFNS), 526–549 (TALETLVISYNSFTGNIPESITRC), 550–572 (VNLIWLSLAGNNLTGSIPSGFGN), 573–597 (LQNLAILQLNKNSLSGKVPAELGSC), 599–621 (NLIWLDLNSNELTGTIPPQLAAQ), and 650–673 (GVLFEFLDIRPDRLANFPAVHLCS). N-linked (GlcNAc...) asparagine glycans are attached at residues Asn145, Asn163, Asn197, and Asn210. N-linked (GlcNAc...) asparagine glycans are attached at residues Asn254, Asn264, and Asn279. 2 N-linked (GlcNAc...) asparagine glycosylation sites follow: Asn400 and Asn413. Asn466 carries N-linked (GlcNAc...) asparagine glycosylation. 2 N-linked (GlcNAc...) asparagine glycosylation sites follow: Asn512 and Asn524. Asn561 carries N-linked (GlcNAc...) asparagine glycosylation. Tyr678 serves as a coordination point for brassinolide. 4 LRR repeats span residues 689–712 (NGSMIFLDLSYNSLTGTIPASFGN), 713–736 (MTYLEVLNLGHNELTGAIPDAFTG), 738–760 (KGIGALDLSHNHLTGVIPPGFGC), and 762–786 (HFLADFDVSNNNLTGEIPTSGQLIT). Positions 799–806 (CGIPLNPC) match the Cys pair 2 motif. A helical membrane pass occupies residues 829-849 (SVFLAVTLSVLILFSLLIIHY). One can recognise a Protein kinase domain in the interval 913-1196 (FCAETLIGSG…FQVDSGSNFL (284 aa)). ATP-binding positions include 919 to 927 (IGSGGFGEV), Lys941, 987 to 989 (EYM), 993 to 996 (SLDF), 1039 to 1044 (DMKSSN), and Asp1057. Residue Asp1039 is the Proton acceptor of the active site.

This sequence belongs to the protein kinase superfamily. Ser/Thr protein kinase family. In terms of tissue distribution, highly expressed in roots. Expressed at low levels in shoots.

It is found in the cell membrane. It catalyses the reaction L-seryl-[protein] + ATP = O-phospho-L-seryl-[protein] + ADP + H(+). The catalysed reaction is L-threonyl-[protein] + ATP = O-phospho-L-threonyl-[protein] + ADP + H(+). May be involved in brassenosteroid (BR) perception in roots. The sequence is that of Brassinosteroid LRR receptor kinase BRL3 from Oryza sativa subsp. japonica (Rice).